A 485-amino-acid polypeptide reads, in one-letter code: Probable coniferyl aldehyde dehydrogenase (485 aa).

Residues Glu-226 and Cys-260 contribute to the active site.

It belongs to the aldehyde dehydrogenase family.

It carries out the reaction (E)-coniferaldehyde + NADP(+) + H2O = (E)-ferulate + NADPH + 2 H(+). The catalysed reaction is (E)-coniferaldehyde + NAD(+) + H2O = (E)-ferulate + NADH + 2 H(+). This chain is Probable coniferyl aldehyde dehydrogenase (calB), found in Caulobacter vibrioides (strain ATCC 19089 / CIP 103742 / CB 15) (Caulobacter crescentus).